Consider the following 211-residue polypeptide: Transcription factor ces-2 (211 aa).

The segment covering 83-101 (VSSRSSTVSSSHFSSPQRS) has biased composition (low complexity). Disordered regions lie at residues 83–152 (VSSR…HALE) and 184–211 (NSEV…TIEV). The segment covering 111-152 (PEEKKDSAYFERRRKNNDAAKRSRDARRQKEEQIASKAHALE) has biased composition (basic and acidic residues). Positions 116 to 179 (DSAYFERRRK…AQLRFLLFSK (64 aa)) constitute a bZIP domain. The tract at residues 122-140 (RRRKNNDAAKRSRDARRQK) is basic motif. Positions 144–172 (IASKAHALERENMQLRGKVSSLEQEAAQL) are leucine-zipper. Residues 190 to 200 (ESNDSTETNDS) are compositionally biased toward low complexity. A compositionally biased stretch (basic and acidic residues) spans 201 to 211 (NDSKSDSTIEV).

Belongs to the bZIP family. As to quaternary structure, interacts with NFIL3 transcription factor homolog atf-2.

It is found in the nucleus. In terms of biological role, transcription factor. Required to activate programmed cell death in the sister cells of the serotoninergic neurosecretory motor (NSM) neurons. Negatively regulates the activity of ces-1 which in turn negatively regulates the activities of cell-killing genes. Binds to the DNA sequence 5'-RTTACGTAAY-3'. Involved in the development of the excretory duct cell, by positively modulating embryonic transcription of putative transcription factor lin-48, acting in concert with NFIL3 transcription factor homolog atf-2. Positively modulates expression of neuropeptide pigment dispersing factor homologs pdf-1 and pdf-2. The protein is Transcription factor ces-2 (ces-2) of Caenorhabditis elegans.